A 291-amino-acid chain; its full sequence is Protein SpdB (291 aa).

Transmembrane regions (helical) follow at residues 24 to 44, 71 to 91, and 99 to 119; these read VVVI…LVVG, ITGV…AHAL, and WLAV…HGLW.

The protein localises to the cell membrane. In terms of biological role, involved in plasmid transfer. This chain is Protein SpdB (spdB), found in Streptomyces lividans.